A 248-amino-acid polypeptide reads, in one-letter code: Triosephosphate isomerase B (248 aa).

Substrate is bound by residues Asn11 and Lys13. Catalysis depends on His95, which acts as the Electrophile. Catalysis depends on Glu165, which acts as the Proton acceptor.

The protein belongs to the triosephosphate isomerase family. Homodimer.

The protein resides in the cytoplasm. It catalyses the reaction dihydroxyacetone phosphate = methylglyoxal + phosphate. The enzyme catalyses D-glyceraldehyde 3-phosphate = dihydroxyacetone phosphate. It functions in the pathway carbohydrate degradation; glycolysis; D-glyceraldehyde 3-phosphate from glycerone phosphate: step 1/1. The protein operates within carbohydrate biosynthesis; gluconeogenesis. Functionally, triosephosphate isomerase is an extremely efficient metabolic enzyme that catalyzes the interconversion between dihydroxyacetone phosphate (DHAP) and D-glyceraldehyde-3-phosphate (G3P) in glycolysis and gluconeogenesis. It is also responsible for the non-negligible production of methylglyoxal a reactive cytotoxic side-product that modifies and can alter proteins, DNA and lipids. This is Triosephosphate isomerase B (tpi1b) from Danio rerio (Zebrafish).